Here is a 564-residue protein sequence, read N- to C-terminus: Glutamyl-tRNA(Gln) amidotransferase subunit B, mitochondrial (564 aa).

A mitochondrion-targeting transit peptide spans 1–88 (MIRQCVSHRG…DTDAKLFSRA (88 aa)). A disordered region spans residues 26-63 (PFHHPSPRPLGRKNWSTSDEAKSKRAAMRKGGAPPPEH).

It belongs to the GatB/GatE family. GatB subfamily. In terms of assembly, subunit of the heterotrimeric GatCAB amidotransferase (AdT) complex, composed of A, B and C subunits.

The protein resides in the mitochondrion. It carries out the reaction L-glutamyl-tRNA(Gln) + L-glutamine + ATP + H2O = L-glutaminyl-tRNA(Gln) + L-glutamate + ADP + phosphate + H(+). In terms of biological role, allows the formation of correctly charged Gln-tRNA(Gln) through the transamidation of misacylated Glu-tRNA(Gln) in the mitochondria. The reaction takes place in the presence of glutamine and ATP through an activated gamma-phospho-Glu-tRNA(Gln). This is Glutamyl-tRNA(Gln) amidotransferase subunit B, mitochondrial from Ajellomyces capsulatus (strain G186AR / H82 / ATCC MYA-2454 / RMSCC 2432) (Darling's disease fungus).